The sequence spans 966 residues: Probable transport protein MmpL11 (966 aa).

The next 12 helical transmembrane spans lie at 13 to 33 (WLVF…AMTQ), 188 to 208 (IILM…IPLA), 214 to 234 (VVIT…SVFV), 235 to 255 (TSTV…FILM), 279 to 299 (GLAV…IYLI), 311 to 331 (AILA…AVLA), 373 to 393 (ALAA…MVLG), 527 to 547 (TQPL…LISI), 557 to 577 (VLMT…VFQW), 595 to 615 (VPPL…IFLL), 646 to 666 (AALI…PLVA), and 668 to 688 (IGVA…LVLV).

This sequence belongs to the resistance-nodulation-cell division (RND) (TC 2.A.6) family. MmpL subfamily.

It localises to the cell membrane. The polypeptide is Probable transport protein MmpL11 (mmpL11) (Mycobacterium bovis (strain ATCC BAA-935 / AF2122/97)).